A 348-amino-acid polypeptide reads, in one-letter code: Nuclear receptor subfamily 1 group I member 3 (348 aa).

Positions 8–83 (LRNCVVCGDQ…AGMRKDMILS (76 aa)) form a DNA-binding region, nuclear receptor. An NR C4-type zinc finger spans residues 11 to 31 (CVVCGDQATGYHFNALTCEGC). A Phosphothreonine; by PKC modification is found at Thr38. The segment at 47-71 (CPFAGSCEVSKTQRRHCPACRLQKC) adopts an NR C4-type zinc-finger fold. An NR LBD domain is found at 109–348 (EQEELIRTLL…MMPLLQEICS (240 aa)).

The protein belongs to the nuclear hormone receptor family. NR1 subfamily. Heterodimer of NR1I3 and RXR. Interacts with PSMC4. Interacts with ECT2. Directly interacts with DNAJC7; this complex may also include HSP90. Interacts with CRY1. Interacts with CRY2 in a ligand-dependent manner. Post-translationally, phosphorylated at Thr-38 by PKC, dephosphorylation of Thr-38 is required for nuclear translocation and activation.

It is found in the nucleus. The protein resides in the cytoplasm. Its subcellular location is the cytoskeleton. Its function is as follows. Binds and transactivates the retinoic acid response elements that control expression of the retinoic acid receptor beta 2 and alcohol dehydrogenase 3 genes. Transactivates both the phenobarbital responsive element module of the human CYP2B6 gene and the CYP3A4 xenobiotic response element. In Pan troglodytes (Chimpanzee), this protein is Nuclear receptor subfamily 1 group I member 3 (NR1I3).